The sequence spans 2596 residues: Protein unc-79 homolog (2596 aa).

Residues serine 754 and serine 758 each carry the phosphoserine modification. Disordered stretches follow at residues 907 to 931 (GPEGEEEENPAAKHGENPGNRTVPS), 1539 to 1573 (SQRQNDHHGRSRQNSATRPDNTEIPKNPGTEGFQE), 1594 to 1632 (VDSPGKPAPREDLDLIDLSSDSTSGPEKHSILSTSDSDS), 1648 to 1679 (EEEEMMNQGNGGALGNNAASSPSIPSQPSVLS), 1695 to 1832 (KDFS…FKIQ), and 1863 to 1909 (LGEQ…KQIQ). The segment covering 1594-1606 (VDSPGKPAPREDL) has biased composition (basic and acidic residues). A compositionally biased stretch (low complexity) spans 1662–1679 (GNNAASSPSIPSQPSVLS). The segment covering 1704–1713 (NHQSASNEDS) has biased composition (polar residues). Residues 1726–1735 (ELSKSEELRE) are compositionally biased toward basic and acidic residues. The span at 1897-1908 (ETSSHSSISKQI) shows a compositional bias: polar residues. 2 consecutive transmembrane segments (helical) span residues 2184–2204 (LLSFVIQNAVFTLAYLVELCG) and 2426–2446 (CVLHMCSLFHAFIFAQLWTVY).

The protein belongs to the unc-79 family. NALCN complex consists of NALCN and auxiliary subunits, UNC79, UNC80 and NACL1. These auxiliary subunits are essential for the NALCN channel function. UNC80 bridges NALCN to UNC79. Interacts with NALCN. Interacts with UNC80.

The protein resides in the cell membrane. Auxiliary subunit of the NALCN sodium channel complex. The NALCN sodium channel complex is a voltage-gated ion channel responsible for the resting Na(+) permeability that controls neuronal excitability. Activated by neuropeptides substance P, neurotensin, and extracellular calcium that regulates neuronal excitability by controlling the sizes of NALCN-dependent sodium-leak current. The sequence is that of Protein unc-79 homolog (Unc79) from Mus musculus (Mouse).